The following is a 500-amino-acid chain: NAD(P)H-quinone oxidoreductase chain 4, chloroplastic (500 aa).

The next 14 helical transmembrane spans lie at 4–24 (FPWL…MLFL), 35–55 (YTIC…CYNF), 87–107 (IGTI…AFPV), 113–130 (LFHF…GSFS), 134–154 (LLLF…LLAM), 167–187 (FILY…GLSL), 211–231 (ILFY…IPLH), 242–262 (HYST…YGLV), 272–292 (AHSM…IYAA), 305–325 (IAYS…SITD), 330–350 (GAIL…FLAG), 386–406 (LALP…GIIT), 416–436 (ILII…LLSM), and 462–482 (LFLS…PDFV).

The protein belongs to the complex I subunit 4 family.

It is found in the plastid. Its subcellular location is the chloroplast thylakoid membrane. It catalyses the reaction a plastoquinone + NADH + (n+1) H(+)(in) = a plastoquinol + NAD(+) + n H(+)(out). The catalysed reaction is a plastoquinone + NADPH + (n+1) H(+)(in) = a plastoquinol + NADP(+) + n H(+)(out). The polypeptide is NAD(P)H-quinone oxidoreductase chain 4, chloroplastic (Lepidium virginicum (Virginia pepperweed)).